Here is a 283-residue protein sequence, read N- to C-terminus: Protein BASIC PENTACYSTEINE1 (283 aa).

The interval 111-170 (RFEENPIPPPAPCEEQTGKKRKMRGSIATPTVPKAKKMRKPKEERDVTNNNVQQQQQRVK) is disordered. Over residues 158–169 (TNNNVQQQQQRV) the composition is skewed to low complexity.

Belongs to the BBR/BPC family. As to expression, expressed in seedlings, leaves and pistils. Detected in the base of flowers and tips of carpels, in leaf and sepal vasculature, in young rosette, in the lateral and tip of primary roots, and in the whole ovule.

The protein localises to the nucleus. Its function is as follows. Transcriptional regulator that specifically binds to GA-rich elements (GAGA-repeats) present in regulatory sequences of genes involved in developmental processes. Negatively regulates the homeotic gene AGL11/STK, which controls ovule primordium identity, by a cooperative binding to purine-rich elements present in the regulatory sequence leading to DNA conformational changes. This chain is Protein BASIC PENTACYSTEINE1 (BPC1), found in Arabidopsis thaliana (Mouse-ear cress).